A 528-amino-acid polypeptide reads, in one-letter code: Endoglucanase 24 (528 aa).

Residues 1 to 24 (MGSKTKGCCGWLIVALVASLVATA) form the signal peptide. The active-site Nucleophile is the Asp-109. A glycan (N-linked (GlcNAc...) asparagine) is linked at Asn-259. His-446 is a catalytic residue. Asn-487 is a glycosylation site (N-linked (GlcNAc...) asparagine). Catalysis depends on residues Asp-492 and Glu-501.

Belongs to the glycosyl hydrolase 9 (cellulase E) family.

Its subcellular location is the secreted. It carries out the reaction Endohydrolysis of (1-&gt;4)-beta-D-glucosidic linkages in cellulose, lichenin and cereal beta-D-glucans.. This chain is Endoglucanase 24, found in Oryza sativa subsp. japonica (Rice).